A 481-amino-acid polypeptide reads, in one-letter code: Eukaryotic translation initiation factor 3 subunit L (481 aa).

Residues 1–22 (MSVDARTAYPGSRPPANMQDES) form a disordered region. Residues 262 to 457 (DAIRTFSHIL…DLDYAIEGNL (196 aa)) enclose the PCI domain.

The protein belongs to the eIF-3 subunit L family. Component of the eukaryotic translation initiation factor 3 (eIF-3) complex.

It localises to the cytoplasm. Its function is as follows. Component of the eukaryotic translation initiation factor 3 (eIF-3) complex, which is involved in protein synthesis of a specialized repertoire of mRNAs and, together with other initiation factors, stimulates binding of mRNA and methionyl-tRNAi to the 40S ribosome. The eIF-3 complex specifically targets and initiates translation of a subset of mRNAs involved in cell proliferation. The protein is Eukaryotic translation initiation factor 3 subunit L of Coccidioides immitis (strain RS) (Valley fever fungus).